The primary structure comprises 972 residues: N-alpha-acetyltransferase 25, NatB auxiliary subunit (972 aa).

TPR repeat units lie at residues 11–44, 45–78, 79–112, and 114–146; these read NDRRLRPIYDYLDNGNNKMAIQQADKLLKKHKDL, HCAKVLKAIGLQRTGKQEEAFTLAQEVAALEPTD, DNSLQALTILYREMHRPELVTKLYEAAVKKVPNS, and EYHSHLFMAYARVGEYKKMQQAGMALYKIVPKN.

It belongs to the MDM20/NAA25 family. As to quaternary structure, component of the N-terminal acetyltransferase B (NatB) complex which is composed of NAA20 and NAA25.

It localises to the cytoplasm. In terms of biological role, non-catalytic subunit of the NatB complex which catalyzes acetylation of the N-terminal methionine residues of peptides beginning with Met-Asp, Met-Glu, Met-Asn and Met-Gln. May play a role in normal cell-cycle progression. In Homo sapiens (Human), this protein is N-alpha-acetyltransferase 25, NatB auxiliary subunit (NAA25).